We begin with the raw amino-acid sequence, 308 residues long: ADP,ATP carrier protein (308 aa).

3 Solcar repeats span residues 6-99 (KNFM…FKRM), 110-203 (KWFA…LKPV), and 211-297 (NNFL…LQVI). 5 consecutive transmembrane segments (helical) span residues 8–35 (FMVD…VKLL), 76–100 (TANV…KRMF), 108–128 (YWKW…VSLS), 179–200 (FNIS…YDSL), and 214–234 (LAAF…SYPI). ADP contacts are provided by arginine 81 and lysine 93. Arginine 238 is an ADP binding site. The tract at residues 238–243 (RRRMMM) is important for transport activity. The Nucleotide carrier signature motif motif lies at 238–243 (RRRMMM). The helical transmembrane segment at 274 to 294 (AGANILRAVAGAGVLAGYDQL) threads the bilayer.

The protein belongs to the mitochondrial carrier (TC 2.A.29) family. In terms of assembly, monomer.

The protein localises to the mitochondrion inner membrane. It carries out the reaction ADP(in) + ATP(out) = ADP(out) + ATP(in). The matrix-open state (m-state) is inhibited by the membrane-permeable bongkrekic acid (BKA). The cytoplasmic-open state (c-state) is inhibited by the membrane-impermeable toxic inhibitor carboxyatractyloside (CATR). Its function is as follows. ADP:ATP antiporter that mediates import of ADP into the mitochondrial matrix for ATP synthesis, and export of ATP out to fuel the cell. Cycles between the cytoplasmic-open state (c-state) and the matrix-open state (m-state): operates by the alternating access mechanism with a single substrate-binding site intermittently exposed to either the cytosolic (c-state) or matrix (m-state) side of the inner mitochondrial membrane. This is ADP,ATP carrier protein (ABT) from Chlamydomonas reinhardtii (Chlamydomonas smithii).